A 435-amino-acid chain; its full sequence is Eukaryotic translation initiation factor 3 subunit E (435 aa).

Positions 219-392 constitute a PCI domain; that stretch reads FFNHAKGRDL…GHVVMGTQPL (174 aa).

This sequence belongs to the eIF-3 subunit E family. As to quaternary structure, component of the eukaryotic translation initiation factor 3 (eIF-3) complex.

It is found in the cytoplasm. In terms of biological role, component of the eukaryotic translation initiation factor 3 (eIF-3) complex, which is involved in protein synthesis of a specialized repertoire of mRNAs and, together with other initiation factors, stimulates binding of mRNA and methionyl-tRNAi to the 40S ribosome. The eIF-3 complex specifically targets and initiates translation of a subset of mRNAs involved in cell proliferation. The sequence is that of Eukaryotic translation initiation factor 3 subunit E (eIF3-S6) from Aedes aegypti (Yellowfever mosquito).